The chain runs to 156 residues: MRVHICAVGRLRAGPEKTLIDDYLQRFDRSGRALGLGPARVIEVEDKKNAGMGAEADLLRKALPKGALICTLDERGKVISSPDFAEKLAGWRDMGRQDLAFVIGGADGIDPSLRAEADFSISFGKMVWPHMMVRLMLAEQVYRSATILSGSPYHRV.

S-adenosyl-L-methionine contacts are provided by residues Leu72, Gly104, and 123 to 128; that span reads FGKMVW.

Belongs to the RNA methyltransferase RlmH family. As to quaternary structure, homodimer.

It is found in the cytoplasm. The catalysed reaction is pseudouridine(1915) in 23S rRNA + S-adenosyl-L-methionine = N(3)-methylpseudouridine(1915) in 23S rRNA + S-adenosyl-L-homocysteine + H(+). Specifically methylates the pseudouridine at position 1915 (m3Psi1915) in 23S rRNA. The protein is Ribosomal RNA large subunit methyltransferase H of Ruegeria sp. (strain TM1040) (Silicibacter sp.).